The following is a 278-amino-acid chain: Sulfide dehydrogenase subunit beta (278 aa).

A propeptide spanning residues M1–I4 is cleaved from the precursor. The FAD-binding FR-type domain occupies M1–I95. [2Fe-2S] cluster-binding residues include C222, C225, and C237.

In terms of assembly, heterodimer of alpha and beta subunits. Requires FAD as cofactor. The cofactor is [2Fe-2S] cluster.

It localises to the cytoplasm. It carries out the reaction n sulfur + hydrogen sulfide + NADP(+) = (n+1) sulfur + NADPH. It catalyses the reaction 2 reduced [2Fe-2S]-[ferredoxin] + NADP(+) + H(+) = 2 oxidized [2Fe-2S]-[ferredoxin] + NADPH. Its function is as follows. A bifunctional enzyme that catalyzes the reduction of elemental sulfur or polysulfide to hydrogen sulfide with NADPH as electron donor. Also functions as a reduced ferredoxin:NADP oxidoreductase with a very high affinity for reduced ferredoxin. Exhibits a broad specificity for various physiological and non-physiological substrates with varied reduction potentials such as methyl viologen, benzyl viologen, FAD, FMN, methylene blue, 2,6-dichlorophenolindophenol (DCIP), cytochrome C and ferricyanide with highest preference for benzyl viologen. Does not reduce fumarate, succinate, nitrate, nitrite, sulfate, sulfite or protons. Does not possess any hydrogenase activity or NADPH-dependent glutamate synthase activity. The protein is Sulfide dehydrogenase subunit beta of Pyrococcus furiosus (strain ATCC 43587 / DSM 3638 / JCM 8422 / Vc1).